The primary structure comprises 276 residues: Omega-amidase NIT2-B (276 aa).

The CN hydrolase domain occupies 4-248; that stretch reads FRLSLVQFLV…ETVISADIDL (245 aa). The active-site Proton acceptor is the Glu-43. The active-site Proton donor is Lys-112. The active-site Nucleophile is Cys-153.

Belongs to the carbon-nitrogen hydrolase superfamily. NIT1/NIT2 family. In terms of assembly, homodimer.

The protein localises to the cytoplasm. The catalysed reaction is 2-oxoglutaramate + H2O = 2-oxoglutarate + NH4(+). The enzyme catalyses 2-oxosuccinamate + H2O = oxaloacetate + NH4(+). Functionally, has omega-amidase activity. The role of omega-amidase is to remove potentially toxic intermediates by converting 2-oxoglutaramate and 2-oxosuccinamate to biologically useful 2-oxoglutarate and oxaloacetate, respectively. The chain is Omega-amidase NIT2-B (nit2b) from Xenopus laevis (African clawed frog).